The primary structure comprises 325 residues: tRNA dimethylallyltransferase (325 aa).

Position 25 to 32 (25 to 32 (GNTGSGKS)) interacts with ATP. 27 to 32 (TGSGKS) lines the substrate pocket. An interaction with substrate tRNA region spans residues 50–53 (DSRQ).

It belongs to the IPP transferase family. As to quaternary structure, monomer. Requires Mg(2+) as cofactor.

It carries out the reaction adenosine(37) in tRNA + dimethylallyl diphosphate = N(6)-dimethylallyladenosine(37) in tRNA + diphosphate. Its function is as follows. Catalyzes the transfer of a dimethylallyl group onto the adenine at position 37 in tRNAs that read codons beginning with uridine, leading to the formation of N6-(dimethylallyl)adenosine (i(6)A). This is tRNA dimethylallyltransferase from Dehalococcoides mccartyi (strain ATCC BAA-2266 / KCTC 15142 / 195) (Dehalococcoides ethenogenes (strain 195)).